We begin with the raw amino-acid sequence, 401 residues long: Succinyl-diaminopimelate desuccinylase (401 aa).

His-71 contacts Zn(2+). Asp-73 is a catalytic residue. Position 104 (Asp-104) interacts with Zn(2+). Glu-138 acts as the Proton acceptor in catalysis. Zn(2+)-binding residues include Glu-139, Glu-167, and His-352.

This sequence belongs to the peptidase M20A family. DapE subfamily. Homodimer. It depends on Zn(2+) as a cofactor. Co(2+) serves as cofactor.

The enzyme catalyses N-succinyl-(2S,6S)-2,6-diaminopimelate + H2O = (2S,6S)-2,6-diaminopimelate + succinate. Its pathway is amino-acid biosynthesis; L-lysine biosynthesis via DAP pathway; LL-2,6-diaminopimelate from (S)-tetrahydrodipicolinate (succinylase route): step 3/3. Its function is as follows. Catalyzes the hydrolysis of N-succinyl-L,L-diaminopimelic acid (SDAP), forming succinate and LL-2,6-diaminopimelate (DAP), an intermediate involved in the bacterial biosynthesis of lysine and meso-diaminopimelic acid, an essential component of bacterial cell walls. The protein is Succinyl-diaminopimelate desuccinylase of Wolbachia sp. subsp. Brugia malayi (strain TRS).